We begin with the raw amino-acid sequence, 90 residues long: Small ribosomal subunit protein uS15 (90 aa).

It belongs to the universal ribosomal protein uS15 family. Part of the 30S ribosomal subunit. Forms a bridge to the 50S subunit in the 70S ribosome, contacting the 23S rRNA.

Functionally, one of the primary rRNA binding proteins, it binds directly to 16S rRNA where it helps nucleate assembly of the platform of the 30S subunit by binding and bridging several RNA helices of the 16S rRNA. Its function is as follows. Forms an intersubunit bridge (bridge B4) with the 23S rRNA of the 50S subunit in the ribosome. This Campylobacter hominis (strain ATCC BAA-381 / DSM 21671 / CCUG 45161 / LMG 19568 / NCTC 13146 / CH001A) protein is Small ribosomal subunit protein uS15.